The sequence spans 355 residues: 3-dehydroquinate synthase (355 aa).

NAD(+)-binding positions include 66-71, 100-104, 124-125, K136, K145, and 163-166; these read SGETTK, GATGD, TT, and FLET. Residues E178, H242, and H256 each coordinate Zn(2+).

Belongs to the sugar phosphate cyclases superfamily. Dehydroquinate synthase family. Co(2+) serves as cofactor. Zn(2+) is required as a cofactor. It depends on NAD(+) as a cofactor.

The protein localises to the cytoplasm. The enzyme catalyses 7-phospho-2-dehydro-3-deoxy-D-arabino-heptonate = 3-dehydroquinate + phosphate. The protein operates within metabolic intermediate biosynthesis; chorismate biosynthesis; chorismate from D-erythrose 4-phosphate and phosphoenolpyruvate: step 2/7. Catalyzes the conversion of 3-deoxy-D-arabino-heptulosonate 7-phosphate (DAHP) to dehydroquinate (DHQ). This is 3-dehydroquinate synthase from Staphylococcus saprophyticus subsp. saprophyticus (strain ATCC 15305 / DSM 20229 / NCIMB 8711 / NCTC 7292 / S-41).